Here is a 344-residue protein sequence, read N- to C-terminus: MSVKPNYSLKPYNTFGVDYACSELISVETKSELIRICSKLFAEDKPYLVLGGGSNILLTENYLGTVVQVCSKGIVCHEDDEFYYLSVEAGEEWHQLVEYCLATAMPGLENLALIPGTVGAAPIQNIGAYGVEFMDVCDWVEFLDLRDGALTRYKQEECQFGYRESIFKGALKGISVITGVGIKLAKKWRPNLSYGPLKRFENTGVTPKEIFDCICSTRNEKLPDPRLIGNAGSFFKNPIISFSKFQELIGKHPSLVGYPLPDGFVKLAAGWLIDNAGLKGASVGDAAVHEQQALVLINRGQASGKDILKLALKVIETIKIQFGVTLEAEPRVIGAYGEKELIDD.

The region spanning 17–187 is the FAD-binding PCMH-type domain; that stretch reads VDYACSELIS…TGVGIKLAKK (171 aa). Arg-163 is an active-site residue. Ser-233 acts as the Proton donor in catalysis. Residue Glu-329 is part of the active site.

Belongs to the MurB family. It depends on FAD as a cofactor.

The protein localises to the cytoplasm. The catalysed reaction is UDP-N-acetyl-alpha-D-muramate + NADP(+) = UDP-N-acetyl-3-O-(1-carboxyvinyl)-alpha-D-glucosamine + NADPH + H(+). It participates in cell wall biogenesis; peptidoglycan biosynthesis. Its function is as follows. Cell wall formation. The protein is UDP-N-acetylenolpyruvoylglucosamine reductase of Shewanella sediminis (strain HAW-EB3).